We begin with the raw amino-acid sequence, 515 residues long: Bifunctional purine biosynthesis protein PurH (515 aa).

The 145-residue stretch at 1–145 folds into the MGS-like domain; sequence MTKRALISVS…KNHASVTVVV (145 aa).

The protein belongs to the PurH family.

It carries out the reaction (6R)-10-formyltetrahydrofolate + 5-amino-1-(5-phospho-beta-D-ribosyl)imidazole-4-carboxamide = 5-formamido-1-(5-phospho-D-ribosyl)imidazole-4-carboxamide + (6S)-5,6,7,8-tetrahydrofolate. The catalysed reaction is IMP + H2O = 5-formamido-1-(5-phospho-D-ribosyl)imidazole-4-carboxamide. It participates in purine metabolism; IMP biosynthesis via de novo pathway; 5-formamido-1-(5-phospho-D-ribosyl)imidazole-4-carboxamide from 5-amino-1-(5-phospho-D-ribosyl)imidazole-4-carboxamide (10-formyl THF route): step 1/1. It functions in the pathway purine metabolism; IMP biosynthesis via de novo pathway; IMP from 5-formamido-1-(5-phospho-D-ribosyl)imidazole-4-carboxamide: step 1/1. The sequence is that of Bifunctional purine biosynthesis protein PurH from Streptococcus gordonii (strain Challis / ATCC 35105 / BCRC 15272 / CH1 / DL1 / V288).